Here is a 177-residue protein sequence, read N- to C-terminus: MSREIEPLIVGRVIGDVLEMFNPSVTMRVTFNSNTIVSNGHELAPSLLLSKPRVEIGGQDLRSFFTLIMMDPDAPSPSNPYMREYLHWMVTDIPGTTDASFGREIVRYETPKPVAGIHRYVFALFKQRGRQAVKAAPETRECFNTNAFSSYFGLSQPVAAVYFNAQRETAPRRRPSY.

Belongs to the phosphatidylethanolamine-binding protein family.

It is found in the cytoplasm. Functionally, may form complexes with phosphorylated ligands by interfering with kinases and their effectors. This Arabidopsis thaliana (Mouse-ear cress) protein is Protein BROTHER of FT and TFL 1 (BFT).